We begin with the raw amino-acid sequence, 190 residues long: Peptidyl-tRNA hydrolase (190 aa).

Phe14 is a binding site for tRNA. His19 serves as the catalytic Proton acceptor. Positions 64, 66, and 112 each coordinate tRNA.

This sequence belongs to the PTH family. In terms of assembly, monomer.

It localises to the cytoplasm. It carries out the reaction an N-acyl-L-alpha-aminoacyl-tRNA + H2O = an N-acyl-L-amino acid + a tRNA + H(+). In terms of biological role, hydrolyzes ribosome-free peptidyl-tRNAs (with 1 or more amino acids incorporated), which drop off the ribosome during protein synthesis, or as a result of ribosome stalling. Catalyzes the release of premature peptidyl moieties from peptidyl-tRNA molecules trapped in stalled 50S ribosomal subunits, and thus maintains levels of free tRNAs and 50S ribosomes. This Staphylococcus aureus (strain Mu3 / ATCC 700698) protein is Peptidyl-tRNA hydrolase.